Reading from the N-terminus, the 664-residue chain is UvrABC system protein B (664 aa).

One can recognise a Helicase ATP-binding domain in the interval E23–G412. Residue G36–T43 participates in ATP binding. The Beta-hairpin signature appears at Y89 to I112. Residues D429–L588 enclose the Helicase C-terminal domain. Residues E622 to E657 form the UVR domain.

This sequence belongs to the UvrB family. Forms a heterotetramer with UvrA during the search for lesions. Interacts with UvrC in an incision complex.

The protein resides in the cytoplasm. The UvrABC repair system catalyzes the recognition and processing of DNA lesions. A damage recognition complex composed of 2 UvrA and 2 UvrB subunits scans DNA for abnormalities. Upon binding of the UvrA(2)B(2) complex to a putative damaged site, the DNA wraps around one UvrB monomer. DNA wrap is dependent on ATP binding by UvrB and probably causes local melting of the DNA helix, facilitating insertion of UvrB beta-hairpin between the DNA strands. Then UvrB probes one DNA strand for the presence of a lesion. If a lesion is found the UvrA subunits dissociate and the UvrB-DNA preincision complex is formed. This complex is subsequently bound by UvrC and the second UvrB is released. If no lesion is found, the DNA wraps around the other UvrB subunit that will check the other stand for damage. The protein is UvrABC system protein B of Thermotoga maritima (strain ATCC 43589 / DSM 3109 / JCM 10099 / NBRC 100826 / MSB8).